A 180-amino-acid chain; its full sequence is Acireductone dioxygenase (180 aa).

Fe(2+) is bound by residues histidine 97, histidine 99, glutamate 103, and histidine 141. Histidine 97, histidine 99, glutamate 103, and histidine 141 together coordinate Ni(2+).

It belongs to the acireductone dioxygenase (ARD) family. Monomer. Requires Fe(2+) as cofactor. Ni(2+) serves as cofactor.

It catalyses the reaction 1,2-dihydroxy-5-(methylsulfanyl)pent-1-en-3-one + O2 = 3-(methylsulfanyl)propanoate + CO + formate + 2 H(+). The catalysed reaction is 1,2-dihydroxy-5-(methylsulfanyl)pent-1-en-3-one + O2 = 4-methylsulfanyl-2-oxobutanoate + formate + 2 H(+). Its pathway is amino-acid biosynthesis; L-methionine biosynthesis via salvage pathway; L-methionine from S-methyl-5-thio-alpha-D-ribose 1-phosphate: step 5/6. Its function is as follows. Catalyzes 2 different reactions between oxygen and the acireductone 1,2-dihydroxy-3-keto-5-methylthiopentene (DHK-MTPene) depending upon the metal bound in the active site. Fe-containing acireductone dioxygenase (Fe-ARD) produces formate and 2-keto-4-methylthiobutyrate (KMTB), the alpha-ketoacid precursor of methionine in the methionine recycle pathway. Ni-containing acireductone dioxygenase (Ni-ARD) produces methylthiopropionate, carbon monoxide and formate, and does not lie on the methionine recycle pathway. The chain is Acireductone dioxygenase from Yersinia pseudotuberculosis serotype O:3 (strain YPIII).